Reading from the N-terminus, the 37-residue chain is Large ribosomal subunit protein bL36c (37 aa).

The protein belongs to the bacterial ribosomal protein bL36 family.

The protein localises to the plastid. It is found in the chloroplast. The polypeptide is Large ribosomal subunit protein bL36c (rpl36) (Euglena gracilis).